The sequence spans 441 residues: Ribosomal protein uS12 methylthiotransferase RimO (441 aa).

The MTTase N-terminal domain occupies 8 to 118 (PKIGFVSLGC…VLEHVHHYVP (111 aa)). Cysteine 17, cysteine 53, cysteine 82, cysteine 150, cysteine 154, and cysteine 157 together coordinate [4Fe-4S] cluster. One can recognise a Radical SAM core domain in the interval 136–373 (LTPRHYAYLK…MQLQQQISAE (238 aa)). In terms of domain architecture, TRAM spans 376-441 (QEKVGREILV…DEYDLWGSRV (66 aa)).

This sequence belongs to the methylthiotransferase family. RimO subfamily. [4Fe-4S] cluster serves as cofactor.

Its subcellular location is the cytoplasm. The catalysed reaction is L-aspartate(89)-[ribosomal protein uS12]-hydrogen + (sulfur carrier)-SH + AH2 + 2 S-adenosyl-L-methionine = 3-methylsulfanyl-L-aspartate(89)-[ribosomal protein uS12]-hydrogen + (sulfur carrier)-H + 5'-deoxyadenosine + L-methionine + A + S-adenosyl-L-homocysteine + 2 H(+). In terms of biological role, catalyzes the methylthiolation of an aspartic acid residue of ribosomal protein uS12. In Shigella flexneri, this protein is Ribosomal protein uS12 methylthiotransferase RimO.